We begin with the raw amino-acid sequence, 195 residues long: 3-isopropylmalate dehydratase small subunit (195 aa).

Belongs to the LeuD family. LeuD type 1 subfamily. In terms of assembly, heterodimer of LeuC and LeuD.

The enzyme catalyses (2R,3S)-3-isopropylmalate = (2S)-2-isopropylmalate. It functions in the pathway amino-acid biosynthesis; L-leucine biosynthesis; L-leucine from 3-methyl-2-oxobutanoate: step 2/4. Catalyzes the isomerization between 2-isopropylmalate and 3-isopropylmalate, via the formation of 2-isopropylmaleate. This chain is 3-isopropylmalate dehydratase small subunit, found in Karelsulcia muelleri (strain GWSS) (Sulcia muelleri).